The primary structure comprises 490 residues: Adenylosuccinate synthetase, chloroplastic (490 aa).

Residues 1-45 (MSLSSLTLDSNPRFAVGGPYHRRYPPLHHPRSFVSCSAKRPAVSA) constitute a chloroplast transit peptide. An N-acetylserine modification is found at S46. Residues 77–83 (GDEGKGK) and 105–107 (GHT) each bind GTP. The Proton acceptor role is filled by D78. Mg(2+)-binding residues include D78 and G105. IMP-binding positions include 78–81 (DEGK), 103–106 (NAGH), T195, R209, Q289, T304, and R368. H106 serves as the catalytic Proton donor. 364–370 (TTTGRPR) lines the substrate pocket. GTP-binding positions include R370, 396-398 (KLD), and 479-481 (GIG).

It belongs to the adenylosuccinate synthetase family. As to quaternary structure, homodimer. It depends on Mg(2+) as a cofactor.

It localises to the plastid. The protein resides in the chloroplast. The catalysed reaction is IMP + L-aspartate + GTP = N(6)-(1,2-dicarboxyethyl)-AMP + GDP + phosphate + 2 H(+). The protein operates within purine metabolism; AMP biosynthesis via de novo pathway; AMP from IMP: step 1/2. Plays an important role in the de novo pathway and in the salvage pathway of purine nucleotide biosynthesis. Catalyzes the first committed step in the biosynthesis of AMP from IMP. The sequence is that of Adenylosuccinate synthetase, chloroplastic from Arabidopsis thaliana (Mouse-ear cress).